The sequence spans 706 residues: Termination factor NPH-I homolog (706 aa).

One can recognise a Helicase ATP-binding domain in the interval 62–227 (IGQGENTRGL…VPCFNMLSGR (166 aa)). Residue 75 to 82 (HQMGMGKT) participates in ATP binding. The DEAH box signature appears at 168 to 171 (DEAH). In terms of domain architecture, Helicase C-terminal spans 417–599 (QCLQPLKVLE…HLNSAFRDLL (183 aa)).

Belongs to the DEAD box helicase family. DEAH subfamily. Part of the viral DNA-directed RNA polymerase that consists of 8 polII-like subunits (RPB1, RPB2, RPB3, RPB5, RPB6, RPB7, RPB9, RPB10), a capping enzyme and a termination factor.

Its subcellular location is the virion. In terms of biological role, putative DNA-dependent ATPase required for providing the needed energy to achieve the termination of early transcripts. This African swine fever virus (isolate Warthog/Namibia/Wart80/1980) (ASFV) protein is Termination factor NPH-I homolog.